The chain runs to 67 residues: Major cold shock protein (67 aa).

Residues 4 to 63 form the CSD domain; that stretch reads GTVKWFNAEKGFGFISTENGQDVFAHFSAIQTSGFKTLEEGQKVAFDVEEGQRGPQAVNI.

As to quaternary structure, homodimer.

The protein resides in the cytoplasm. The protein is Major cold shock protein (cspA) of Streptococcus pyogenes serotype M6 (strain ATCC BAA-946 / MGAS10394).